A 1146-amino-acid polypeptide reads, in one-letter code: DNA polymerase II large subunit (1146 aa).

Belongs to the archaeal DNA polymerase II family. In terms of assembly, heterodimer of a large subunit and a small subunit.

The catalysed reaction is DNA(n) + a 2'-deoxyribonucleoside 5'-triphosphate = DNA(n+1) + diphosphate. It carries out the reaction Exonucleolytic cleavage in the 3'- to 5'-direction to yield nucleoside 5'-phosphates.. Its function is as follows. Possesses two activities: a DNA synthesis (polymerase) and an exonucleolytic activity that degrades single-stranded DNA in the 3'- to 5'-direction. Has a template-primer preference which is characteristic of a replicative DNA polymerase. The protein is DNA polymerase II large subunit of Methanosarcina barkeri (strain Fusaro / DSM 804).